The primary structure comprises 214 residues: Small ribosomal subunit protein uS5 (214 aa).

One can recognise an S5 DRBM domain in the interval 54-117; the sequence is LKYEVMDIKI…KNAKMNIIPV (64 aa).

It belongs to the universal ribosomal protein uS5 family. Part of the 30S ribosomal subunit. Contacts protein S4.

With S4 and S12 plays an important role in translational accuracy. This is Small ribosomal subunit protein uS5 from Sulfurisphaera tokodaii (strain DSM 16993 / JCM 10545 / NBRC 100140 / 7) (Sulfolobus tokodaii).